Consider the following 381-residue polypeptide: L-lactate dehydrogenase (381 aa).

The FMN hydroxy acid dehydrogenase domain maps to 1–380; the sequence is MIISASTDYR…SADSLVRELG (380 aa). Tyrosine 24 lines the substrate pocket. 2 residues coordinate FMN: serine 106 and glutamine 127. Tyrosine 129 contributes to the substrate binding site. Position 155 (threonine 155) interacts with FMN. Substrate is bound at residue arginine 164. Lysine 251 is a binding site for FMN. The active-site Proton acceptor is the histidine 275. Substrate is bound at residue arginine 278. 306–330 contributes to the FMN binding site; the sequence is DSGIRTGLDVVRMIALGADSVLLGR.

The protein belongs to the FMN-dependent alpha-hydroxy acid dehydrogenase family. As to quaternary structure, homotetramer. FMN is required as a cofactor.

It localises to the cell inner membrane. It catalyses the reaction (S)-lactate + A = pyruvate + AH2. In terms of biological role, catalyzes the conversion of L-lactate to pyruvate. Is coupled to the respiratory chain. This chain is L-lactate dehydrogenase, found in Pseudomonas paraeruginosa (strain DSM 24068 / PA7) (Pseudomonas aeruginosa (strain PA7)).